We begin with the raw amino-acid sequence, 242 residues long: Tryptophan synthase alpha chain (242 aa).

Active-site proton acceptor residues include E31 and D42.

It belongs to the TrpA family. As to quaternary structure, tetramer of two alpha and two beta chains.

It catalyses the reaction (1S,2R)-1-C-(indol-3-yl)glycerol 3-phosphate + L-serine = D-glyceraldehyde 3-phosphate + L-tryptophan + H2O. It participates in amino-acid biosynthesis; L-tryptophan biosynthesis; L-tryptophan from chorismate: step 5/5. The alpha subunit is responsible for the aldol cleavage of indoleglycerol phosphate to indole and glyceraldehyde 3-phosphate. This chain is Tryptophan synthase alpha chain, found in Staphylococcus aureus (strain bovine RF122 / ET3-1).